The chain runs to 347 residues: NADH-quinone oxidoreductase subunit H 1 (347 aa).

9 helical membrane passes run 14-34 (IMIG…AYVL), 50-70 (PNVV…KFVF), 83-103 (IFLL…AVIP), 115-135 (VGIL…IMGG), 161-181 (IGFV…TDIV), 198-218 (FLDW…ISAL), 258-278 (AICL…LPPV), 286-306 (VPGI…FAMV), and 321-341 (LGWK…AFVL).

The protein belongs to the complex I subunit 1 family. In terms of assembly, NDH-1 is composed of 14 different subunits. Subunits NuoA, H, J, K, L, M, N constitute the membrane sector of the complex.

Its subcellular location is the cell inner membrane. The catalysed reaction is a quinone + NADH + 5 H(+)(in) = a quinol + NAD(+) + 4 H(+)(out). In terms of biological role, NDH-1 shuttles electrons from NADH, via FMN and iron-sulfur (Fe-S) centers, to quinones in the respiratory chain. The immediate electron acceptor for the enzyme in this species is believed to be ubiquinone. Couples the redox reaction to proton translocation (for every two electrons transferred, four hydrogen ions are translocated across the cytoplasmic membrane), and thus conserves the redox energy in a proton gradient. This subunit may bind ubiquinone. This Rhizobium meliloti (strain 1021) (Ensifer meliloti) protein is NADH-quinone oxidoreductase subunit H 1.